The primary structure comprises 868 residues: DNA mismatch repair protein MutS (868 aa).

620–627 (GPNMGGKS) lines the ATP pocket.

This sequence belongs to the DNA mismatch repair MutS family.

This protein is involved in the repair of mismatches in DNA. It is possible that it carries out the mismatch recognition step. This protein has a weak ATPase activity. The sequence is that of DNA mismatch repair protein MutS from Xylella fastidiosa (strain 9a5c).